We begin with the raw amino-acid sequence, 335 residues long: Fructose-1,6-bisphosphatase class 1 (335 aa).

Mg(2+)-binding residues include Glu-90, Asp-113, Leu-115, and Asp-116. Residues 116–119 (DGSS), Asn-209, Tyr-242, and Lys-272 contribute to the substrate site. Residue Glu-278 coordinates Mg(2+).

Belongs to the FBPase class 1 family. As to quaternary structure, homotetramer. Requires Mg(2+) as cofactor.

The protein resides in the cytoplasm. The catalysed reaction is beta-D-fructose 1,6-bisphosphate + H2O = beta-D-fructose 6-phosphate + phosphate. Its pathway is carbohydrate biosynthesis; gluconeogenesis. The polypeptide is Fructose-1,6-bisphosphatase class 1 (Mannheimia succiniciproducens (strain KCTC 0769BP / MBEL55E)).